The primary structure comprises 431 residues: Light-independent protochlorophyllide reductase subunit N (431 aa).

3 residues coordinate [4Fe-4S] cluster: cysteine 29, cysteine 54, and cysteine 114.

This sequence belongs to the BchN/ChlN family. In terms of assembly, protochlorophyllide reductase is composed of three subunits; ChlL, ChlN and ChlB. Forms a heterotetramer of two ChlB and two ChlN subunits. [4Fe-4S] cluster serves as cofactor.

Its subcellular location is the plastid. It localises to the chloroplast. It carries out the reaction chlorophyllide a + oxidized 2[4Fe-4S]-[ferredoxin] + 2 ADP + 2 phosphate = protochlorophyllide a + reduced 2[4Fe-4S]-[ferredoxin] + 2 ATP + 2 H2O. Its pathway is porphyrin-containing compound metabolism; chlorophyll biosynthesis (light-independent). Component of the dark-operative protochlorophyllide reductase (DPOR) that uses Mg-ATP and reduced ferredoxin to reduce ring D of protochlorophyllide (Pchlide) to form chlorophyllide a (Chlide). This reaction is light-independent. The NB-protein (ChlN-ChlB) is the catalytic component of the complex. In Nephroselmis olivacea (Green alga), this protein is Light-independent protochlorophyllide reductase subunit N.